Here is a 249-residue protein sequence, read N- to C-terminus: ATP synthase subunit a (249 aa).

Transmembrane regions (helical) follow at residues 26-46 (FTNVSAFMVATVVLASGFLYL), 84-104 (FFPFVFSLFMFVLVANFIGLF), 114-134 (IIVTFALSLLVIGTVIFYGFF), 143-163 (LFVPSGVPGIIVPLVVLIEII), 185-205 (ITLKVFAGFVVSLSSLGALGI), and 208-228 (AVLPLLMTVAITALEFLVAFL).

Belongs to the ATPase A chain family. In terms of assembly, F-type ATPases have 2 components, CF(1) - the catalytic core - and CF(0) - the membrane proton channel. CF(1) has five subunits: alpha(3), beta(3), gamma(1), delta(1), epsilon(1). CF(0) has three main subunits: a(1), b(2) and c(9-12). The alpha and beta chains form an alternating ring which encloses part of the gamma chain. CF(1) is attached to CF(0) by a central stalk formed by the gamma and epsilon chains, while a peripheral stalk is formed by the delta and b chains.

It localises to the cell inner membrane. Functionally, key component of the proton channel; it plays a direct role in the translocation of protons across the membrane. The polypeptide is ATP synthase subunit a (Brucella canis (strain ATCC 23365 / NCTC 10854 / RM-666)).